The sequence spans 356 residues: S-adenosylmethionine:tRNA ribosyltransferase-isomerase (356 aa).

The protein belongs to the QueA family. Monomer.

The protein localises to the cytoplasm. It carries out the reaction 7-aminomethyl-7-carbaguanosine(34) in tRNA + S-adenosyl-L-methionine = epoxyqueuosine(34) in tRNA + adenine + L-methionine + 2 H(+). It participates in tRNA modification; tRNA-queuosine biosynthesis. Transfers and isomerizes the ribose moiety from AdoMet to the 7-aminomethyl group of 7-deazaguanine (preQ1-tRNA) to give epoxyqueuosine (oQ-tRNA). The sequence is that of S-adenosylmethionine:tRNA ribosyltransferase-isomerase from Escherichia coli (strain 55989 / EAEC).